We begin with the raw amino-acid sequence, 295 residues long: Small ribosomal subunit protein uS2 (295 aa).

An N-acetylserine modification is found at Ser2. Ser43 is modified (phosphoserine). Lys52 carries the post-translational modification N6-acetyllysine. An interaction with PPP1R16B region spans residues 54-113; the sequence is TWEKLLLAARAIVAIENPADVSVISSRNTGQRAVLKFAAATGATPIAGRFTPGTFTNQIQ. Lys89 carries the N6-acetyllysine; alternate modification. Lys89 is covalently cross-linked (Glycyl lysine isopeptide (Lys-Gly) (interchain with G-Cter in SUMO2); alternate). A Phosphothreonine modification is found at Thr97. Laminin-binding stretches follow at residues 161–180 and 205–229; these read IPCN…MLAR and RDPE…EFQG. [DE]-W-[ST] repeat units follow at residues 230 to 232, 247 to 249, 266 to 268, 275 to 277, and 293 to 295; these read EWT, DWS, and EWS. Residues 242-295 are laminin-binding; the sequence is QPEVADWSEGVQVPSVPIQQFPTEDWSAQPATEDWSAAPTAQATEWVGTTTEWS. The tract at residues 266 to 295 is disordered; the sequence is DWSAQPATEDWSAAPTAQATEWVGTTTEWS. Positions 280-295 are enriched in polar residues; the sequence is PTAQATEWVGTTTEWS.

The protein belongs to the universal ribosomal protein uS2 family. Monomer (37LRP) and homodimer (67LR). Component of the small ribosomal subunit. Mature ribosomes consist of a small (40S) and a large (60S) subunit. The 40S subunit contains about 33 different proteins and 1 molecule of RNA (18S). The 60S subunit contains about 49 different proteins and 3 molecules of RNA (28S, 5.8S and 5S). Interacts with RPS21. Interacts with several laminins including at least LAMB1. Interacts with MDK. The mature dimeric form interacts with PPP1R16B (via its fourth ankyrin repeat). Interacts with PPP1CA only in the presence of PPP1R16B. Post-translationally, acylated. Acylation may be a prerequisite for conversion of the monomeric 37 kDa laminin receptor precursor (37LRP) to the mature dimeric 67 kDa laminin receptor (67LR), and may provide a mechanism for membrane association. Cleaved by stromelysin-3 (ST3) at the cell surface. Cleavage by stromelysin-3 may be a mechanism to alter cell-extracellular matrix interactions.

Its subcellular location is the cell membrane. It is found in the cytoplasm. The protein localises to the nucleus. Its function is as follows. Required for the assembly and/or stability of the 40S ribosomal subunit. Required for the processing of the 20S rRNA-precursor to mature 18S rRNA in a late step of the maturation of 40S ribosomal subunits. Also functions as a cell surface receptor for laminin. Plays a role in cell adhesion to the basement membrane and in the consequent activation of signaling transduction pathways. May play a role in cell fate determination and tissue morphogenesis. Also acts as a receptor for several other ligands, including the pathogenic prion protein, viruses, and bacteria. Acts as a PPP1R16B-dependent substrate of PPP1CA. This Oryctolagus cuniculus (Rabbit) protein is Small ribosomal subunit protein uS2.